Consider the following 98-residue polypeptide: Co-chaperonin GroES (98 aa).

This sequence belongs to the GroES chaperonin family. In terms of assembly, heptamer of 7 subunits arranged in a ring. Interacts with the chaperonin GroEL.

It is found in the cytoplasm. Its function is as follows. Together with the chaperonin GroEL, plays an essential role in assisting protein folding. The GroEL-GroES system forms a nano-cage that allows encapsulation of the non-native substrate proteins and provides a physical environment optimized to promote and accelerate protein folding. GroES binds to the apical surface of the GroEL ring, thereby capping the opening of the GroEL channel. This is Co-chaperonin GroES from Kineococcus radiotolerans (strain ATCC BAA-149 / DSM 14245 / SRS30216).